Consider the following 425-residue polypeptide: Tyrosine--tRNA ligase (425 aa).

Residue Y37 coordinates L-tyrosine. Positions P42–H51 match the 'HIGH' region motif. L-tyrosine contacts are provided by Y175 and Q179. The 'KMSKS' region motif lies at K235–T239. Position 238 (K238) interacts with ATP. The S4 RNA-binding domain occupies A357–G414.

Belongs to the class-I aminoacyl-tRNA synthetase family. TyrS type 1 subfamily. Homodimer.

It is found in the cytoplasm. The enzyme catalyses tRNA(Tyr) + L-tyrosine + ATP = L-tyrosyl-tRNA(Tyr) + AMP + diphosphate + H(+). Catalyzes the attachment of tyrosine to tRNA(Tyr) in a two-step reaction: tyrosine is first activated by ATP to form Tyr-AMP and then transferred to the acceptor end of tRNA(Tyr). This is Tyrosine--tRNA ligase from Pectobacterium carotovorum subsp. carotovorum (strain PC1).